The chain runs to 437 residues: Dihydrofolate synthase/folylpolyglutamate synthase (437 aa).

Position 28-30 (28-30) interacts with 7,8-dihydropteroate; the sequence is DLG. 58-61 contacts ATP; it reads GKGT. Serine 82 serves as a coordination point for Mg(2+). 120–123 contacts 7,8-dihydropteroate; sequence TYFE. Position 144 (glutamate 144) interacts with Mg(2+). 151 to 153 is a 7,8-dihydropteroate binding site; that stretch reads LDA. Residue histidine 171 participates in Mg(2+) binding. ATP is bound by residues asparagine 255, arginine 287, and aspartate 316.

The protein belongs to the folylpolyglutamate synthase family. Monomer. Requires Mg(2+) as cofactor.

The enzyme catalyses 7,8-dihydropteroate + L-glutamate + ATP = 7,8-dihydrofolate + ADP + phosphate + H(+). It carries out the reaction (6S)-5,6,7,8-tetrahydrofolyl-(gamma-L-Glu)(n) + L-glutamate + ATP = (6S)-5,6,7,8-tetrahydrofolyl-(gamma-L-Glu)(n+1) + ADP + phosphate + H(+). The catalysed reaction is 10-formyltetrahydrofolyl-(gamma-L-Glu)(n) + L-glutamate + ATP = 10-formyltetrahydrofolyl-(gamma-L-Glu)(n+1) + ADP + phosphate + H(+). It catalyses the reaction (6R)-5,10-methylenetetrahydrofolyl-(gamma-L-Glu)(n) + L-glutamate + ATP = (6R)-5,10-methylenetetrahydrofolyl-(gamma-L-Glu)(n+1) + ADP + phosphate + H(+). Its pathway is cofactor biosynthesis; tetrahydrofolate biosynthesis; 7,8-dihydrofolate from 2-amino-4-hydroxy-6-hydroxymethyl-7,8-dihydropteridine diphosphate and 4-aminobenzoate: step 2/2. It functions in the pathway cofactor biosynthesis; tetrahydrofolylpolyglutamate biosynthesis. In terms of biological role, functions in two distinct reactions of the de novo folate biosynthetic pathway. Catalyzes the addition of a glutamate residue to dihydropteroate (7,8-dihydropteroate or H2Pte) to form dihydrofolate (7,8-dihydrofolate monoglutamate or H2Pte-Glu). Also catalyzes successive additions of L-glutamate to tetrahydrofolate or 10-formyltetrahydrofolate or 5,10-methylenetetrahydrofolate, leading to folylpolyglutamate derivatives. The protein is Dihydrofolate synthase/folylpolyglutamate synthase (folC) of Haemophilus influenzae (strain ATCC 51907 / DSM 11121 / KW20 / Rd).